Here is a 202-residue protein sequence, read N- to C-terminus: MSRYRGPRVRIIRRLGALPGLTNKTPQLKSSPINQSTSNKKISQYRIRLEEKQKLRFHYGITERQLLNYVRIARHAKGSTGEILLQLLEMRLDNIIFRLGMAPTIPGARQLVNHRHILVNEHIVDIPSYRCKPQDFITIKDRQKSQAIISKNIEFYQKYKIPNHLIYNSLKKQGLVNQILDRESIGLKINELLVVEYYSRQA.

In terms of domain architecture, S4 RNA-binding spans 90–153; that stretch reads MRLDNIIFRL…KSQAIISKNI (64 aa).

The protein belongs to the universal ribosomal protein uS4 family. In terms of assembly, part of the 30S ribosomal subunit. Contacts protein S5. The interaction surface between S4 and S5 is involved in control of translational fidelity.

The protein localises to the plastid. It localises to the chloroplast. Its function is as follows. One of the primary rRNA binding proteins, it binds directly to 16S rRNA where it nucleates assembly of the body of the 30S subunit. With S5 and S12 plays an important role in translational accuracy. This chain is Small ribosomal subunit protein uS4c (rps4), found in Splachnum sphaericum (Pinkstink dung moss).